Reading from the N-terminus, the 489-residue chain is Coronin-1B (489 aa).

Position 2 is a phosphoserine; by PKC (serine 2). 6 WD repeats span residues 18-72 (QPVK…GRID), 73-122 (KAYP…SPLT), 123-166 (EPVV…GTAE), 167-210 (ELYR…RGTL), 211-256 (VAER…ENLE), and 257-296 (EPMA…RYFE). The segment at 408–444 (RRNVLSDSRPAMAPGSSHLGAPASTTTAADATPSGSL) is disordered. Residues 428 to 441 (APASTTTAADATPS) show a composition bias toward low complexity. A coiled-coil region spans residues 449 to 474 (EAGKLEEVMQELRALRALVKEQGDRI).

This sequence belongs to the WD repeat coronin family. Forms homooligomers, but does not form complexes with the other coronins. Interacts with Arp2/3 complex components, including ACTR2, ARPC1B and ARPC2. Binds actin. In terms of processing, phosphorylation by PKC on Ser-2 regulates the interaction with the Arp2/3 complex and cell motility in fibroblasts. Phosphorylation does not seem to affect subcellular location.

It is found in the cytoplasm. The protein resides in the cytoskeleton. It localises to the stress fiber. Its function is as follows. Regulates leading edge dynamics and cell motility in fibroblasts. May be involved in cytokinesis and signal transduction. The chain is Coronin-1B (CORO1B) from Homo sapiens (Human).